The primary structure comprises 620 residues: Chaperone protein HscA homolog (620 aa).

The protein belongs to the heat shock protein 70 family.

Functionally, chaperone involved in the maturation of iron-sulfur cluster-containing proteins. Has a low intrinsic ATPase activity which is markedly stimulated by HscB. The polypeptide is Chaperone protein HscA homolog (Acinetobacter baylyi (strain ATCC 33305 / BD413 / ADP1)).